The chain runs to 375 residues: Erythronate-4-phosphate dehydrogenase (375 aa).

Ser45 and Thr66 together coordinate substrate. 2 residues coordinate NAD(+): Asp146 and Thr175. Arg208 is an active-site residue. Residue Asp232 coordinates NAD(+). Glu237 is an active-site residue. His254 serves as the catalytic Proton donor. Gly257 is an NAD(+) binding site. Residue Tyr258 coordinates substrate.

Belongs to the D-isomer specific 2-hydroxyacid dehydrogenase family. PdxB subfamily. As to quaternary structure, homodimer.

Its subcellular location is the cytoplasm. The catalysed reaction is 4-phospho-D-erythronate + NAD(+) = (R)-3-hydroxy-2-oxo-4-phosphooxybutanoate + NADH + H(+). It participates in cofactor biosynthesis; pyridoxine 5'-phosphate biosynthesis; pyridoxine 5'-phosphate from D-erythrose 4-phosphate: step 2/5. Catalyzes the oxidation of erythronate-4-phosphate to 3-hydroxy-2-oxo-4-phosphonooxybutanoate. The chain is Erythronate-4-phosphate dehydrogenase from Edwardsiella ictaluri (strain 93-146).